Here is a 267-residue protein sequence, read N- to C-terminus: 4-hydroxy-tetrahydrodipicolinate reductase (267 aa).

Residues G8–M13 and D34 contribute to the NAD(+) site. Residue R35 participates in NADP(+) binding. NAD(+) is bound by residues G98–T100 and A122–F125. H155 functions as the Proton donor/acceptor in the catalytic mechanism. (S)-2,3,4,5-tetrahydrodipicolinate is bound at residue H156. The Proton donor role is filled by K159. (S)-2,3,4,5-tetrahydrodipicolinate is bound at residue G165–T166.

The protein belongs to the DapB family.

It is found in the cytoplasm. It catalyses the reaction (S)-2,3,4,5-tetrahydrodipicolinate + NAD(+) + H2O = (2S,4S)-4-hydroxy-2,3,4,5-tetrahydrodipicolinate + NADH + H(+). The catalysed reaction is (S)-2,3,4,5-tetrahydrodipicolinate + NADP(+) + H2O = (2S,4S)-4-hydroxy-2,3,4,5-tetrahydrodipicolinate + NADPH + H(+). It participates in amino-acid biosynthesis; L-lysine biosynthesis via DAP pathway; (S)-tetrahydrodipicolinate from L-aspartate: step 4/4. Its function is as follows. Catalyzes the conversion of 4-hydroxy-tetrahydrodipicolinate (HTPA) to tetrahydrodipicolinate. The polypeptide is 4-hydroxy-tetrahydrodipicolinate reductase (Pseudomonas amygdali pv. tabaci (Pseudomonas syringae pv. tabaci)).